A 304-amino-acid polypeptide reads, in one-letter code: Bifunctional protein FolD 3 (304 aa).

Residues 172–174 (GRS), S197, and I238 contribute to the NADP(+) site.

Belongs to the tetrahydrofolate dehydrogenase/cyclohydrolase family. As to quaternary structure, homodimer.

It carries out the reaction (6R)-5,10-methylene-5,6,7,8-tetrahydrofolate + NADP(+) = (6R)-5,10-methenyltetrahydrofolate + NADPH. It catalyses the reaction (6R)-5,10-methenyltetrahydrofolate + H2O = (6R)-10-formyltetrahydrofolate + H(+). Its pathway is one-carbon metabolism; tetrahydrofolate interconversion. Its function is as follows. Catalyzes the oxidation of 5,10-methylenetetrahydrofolate to 5,10-methenyltetrahydrofolate and then the hydrolysis of 5,10-methenyltetrahydrofolate to 10-formyltetrahydrofolate. The sequence is that of Bifunctional protein FolD 3 from Rhizorhabdus wittichii (strain DSM 6014 / CCUG 31198 / JCM 15750 / NBRC 105917 / EY 4224 / RW1) (Sphingomonas wittichii).